A 208-amino-acid chain; its full sequence is Putative dioxygenase RT0384 (208 aa).

It belongs to the intradiol ring-cleavage dioxygenase family.

This chain is Putative dioxygenase RT0384, found in Rickettsia typhi (strain ATCC VR-144 / Wilmington).